The following is a 714-amino-acid chain: DNA ligase (714 aa).

NAD(+) contacts are provided by residues 59 to 63, 108 to 109, and Glu139; these read DYEYD and SL. Lys141 (N6-AMP-lysine intermediate) is an active-site residue. Positions 162, 200, 325, and 349 each coordinate NAD(+). Residues Cys443, Cys446, Cys461, and Cys466 each coordinate Zn(2+). The region spanning 624-713 is the BRCT domain; it reads VVENIFEGKT…IPDDLKDKVH (90 aa).

Belongs to the NAD-dependent DNA ligase family. LigA subfamily. Mg(2+) serves as cofactor. The cofactor is Mn(2+).

The catalysed reaction is NAD(+) + (deoxyribonucleotide)n-3'-hydroxyl + 5'-phospho-(deoxyribonucleotide)m = (deoxyribonucleotide)n+m + AMP + beta-nicotinamide D-nucleotide.. In terms of biological role, DNA ligase that catalyzes the formation of phosphodiester linkages between 5'-phosphoryl and 3'-hydroxyl groups in double-stranded DNA using NAD as a coenzyme and as the energy source for the reaction. It is essential for DNA replication and repair of damaged DNA. This chain is DNA ligase, found in Persephonella marina (strain DSM 14350 / EX-H1).